The primary structure comprises 212 residues: Octanoyltransferase (212 aa).

The BPL/LPL catalytic domain maps to 33–212; sequence GTAPELVWLL…ATFPEVFGAD (180 aa). Residues 72–79, 144–146, and 157–159 contribute to the substrate site; these read RGGQYTYH, AIG, and GIA. Residue Cys-175 is the Acyl-thioester intermediate of the active site.

Belongs to the LipB family.

The protein localises to the cytoplasm. The catalysed reaction is octanoyl-[ACP] + L-lysyl-[protein] = N(6)-octanoyl-L-lysyl-[protein] + holo-[ACP] + H(+). It participates in protein modification; protein lipoylation via endogenous pathway; protein N(6)-(lipoyl)lysine from octanoyl-[acyl-carrier-protein]: step 1/2. Its function is as follows. Catalyzes the transfer of endogenously produced octanoic acid from octanoyl-acyl-carrier-protein onto the lipoyl domains of lipoate-dependent enzymes. Lipoyl-ACP can also act as a substrate although octanoyl-ACP is likely to be the physiological substrate. The sequence is that of Octanoyltransferase from Paramagnetospirillum magneticum (strain ATCC 700264 / AMB-1) (Magnetospirillum magneticum).